Reading from the N-terminus, the 664-residue chain is CRISPR-associated DNA-binding protein Cas12m (664 aa).

Positions 1-137 (MKRVTITIDG…AKYRELIGSD (137 aa)) are recognition domain (REC1-N). The segment at 138–212 (EETAQMDTEI…AAKDRIRAAG (75 aa)) is recognition domain (REC2). Residues 213–270 (NDIENLEKDRQAAVIKAYNNSGLWWGNYNAVLESYKKARIKALKDGAELKYHRFDGSG) are recognition domain (REC1-C). The wedge domain (WED) stretch occupies residues 271-390 (RFTNQIQGGM…VWSVVFTFTT (120 aa)). A linker region spans residues 391–404 (DCPTYDQRSSTGNR). The tract at residues 405-618 (CGLNLGWKKQ…KNGTQIEQVS (214 aa)) is ruvC-I. The segment at 618-650 (STASSATCSACKGKMEQVDGIMWRCRECRALVD) is target nucleic-acid binding (TNB). Positions 625, 628, 642, and 645 each coordinate Zn(2+). The segment at 651–664 (QDINAAANLFREVL) is ruvC-II. Mg(2+) is bound at residue aspartate 652.

Belongs to the CRISPR-associated DNA-binding protein Cas12m family. Requires Mg(2+) as cofactor. Zn(2+) is required as a cofactor.

In terms of biological role, CRISPR (clustered regularly interspaced short palindromic repeat), is an adaptive immune system that provides protection against mobile genetic elements (viruses, transposable elements and conjugative plasmids). CRISPR clusters contain sequences complementary to antecedent mobile elements and target invading nucleic acids. CRISPR clusters are transcribed and processed into CRISPR RNA (crRNA). Recognizes a short motif in the CRISPR repeat sequences (the 5' PAM or protospacer adjacent motif, 5'-CCN-3' in this organism) to help distinguish self versus nonself, as targets within the bacterial CRISPR locus do not have PAMs. Cas12m-crRNA binds DNA in a PAM-dependent, crRNA-guided fashion. DNA-binding probably inhibits transcription, leading to gene silencing. Upon expression in E.coli as a CRISPR region preferentially binds to its associated crRNA. Probably required for pre-crRNA processing to mature crRNA. In Pelobacter propionicus (strain DSM 2379 / NBRC 103807 / OttBd1), this protein is CRISPR-associated DNA-binding protein Cas12m.